The sequence spans 529 residues: Probable biotin-dependent acyl-coenzyme A carboxylase beta2 subunit (529 aa).

The region spanning 20-271 (MSGKLDEINA…IKQGPAPAPV (252 aa)) is the CoA carboxyltransferase N-terminal domain. The 251-residue stretch at 270–520 (PVTEPLFDAE…SAIANGPIKG (251 aa)) folds into the CoA carboxyltransferase C-terminal domain.

It belongs to the AccD/PCCB family. As to quaternary structure, the biotin-dependent acyl-CoA carboxylase complex is composed of an AccA protein, which contains the biotin carboxylase (BC) and biotin carboxyl carrier protein (BCCP) domains, and an AccD protein, which contains the carboxyl transferase (CT) domain.

Functionally, component of a biotin-dependent acyl-CoA carboxylase complex. This subunit transfers the CO2 from carboxybiotin to the CoA ester substrate. The polypeptide is Probable biotin-dependent acyl-coenzyme A carboxylase beta2 subunit (accD2) (Mycobacterium tuberculosis (strain ATCC 25618 / H37Rv)).